A 190-amino-acid polypeptide reads, in one-letter code: Probable nicotinate-nucleotide adenylyltransferase (190 aa).

This sequence belongs to the NadD family.

It catalyses the reaction nicotinate beta-D-ribonucleotide + ATP + H(+) = deamido-NAD(+) + diphosphate. It participates in cofactor biosynthesis; NAD(+) biosynthesis; deamido-NAD(+) from nicotinate D-ribonucleotide: step 1/1. Its function is as follows. Catalyzes the reversible adenylation of nicotinate mononucleotide (NaMN) to nicotinic acid adenine dinucleotide (NaAD). This Azobacteroides pseudotrichonymphae genomovar. CFP2 protein is Probable nicotinate-nucleotide adenylyltransferase.